We begin with the raw amino-acid sequence, 108 residues long: Alkyltransferase-like protein 1 (108 aa).

The protein belongs to the MGMT family. ATL subfamily.

Functionally, involved in DNA damage recognition. Binds DNA containing O(6)-methylguanine and larger O(6)-alkylguanine adducts. The DNA is bent, the damaged base is rotated out of the DNA duplex into a hydrophobic binding pocket (nucleotide flipping), with Arg-39 donating a hydrogen bond to the orphaned cytosine to stabilize the extrahelical DNA conformation. This structural change in DNA presents the lesion to the nucleotide excision repair (NER) pathway. The affinity for O(6)-alkylguanine adducts increases with the size of the alkyl group. Low affinity small O(6)-alkylguanines are directed to the global genome repair pathway of NER via rhp7-rhp16 and rhp41-rhp23, while strong binding to bulky O(6)-alkylguanines stalls the transcription machinery and diverts the damage to the transcription-coupled repair pathway of NER via rhp26. The chain is Alkyltransferase-like protein 1 from Schizosaccharomyces pombe (strain 972 / ATCC 24843) (Fission yeast).